The chain runs to 366 residues: Galactose-1-phosphate uridylyltransferase (366 aa).

Position 27 is a phosphoserine (Ser27). Residues Cys54 and Cys57 each coordinate Zn(2+). Residues Ala63 and 79–80 (ND) contribute to the UDP-alpha-D-glucose site. A Zn(2+)-binding site is contributed by His124. Residue Asn169 participates in UDP-alpha-D-glucose binding. His180 contacts Zn(2+). His182 functions as the Tele-UMP-histidine intermediate in the catalytic mechanism. A UDP-alpha-D-glucose-binding site is contributed by Gln184. Residues Glu198, His297, His314, and His316 each coordinate Fe cation. UDP-alpha-D-glucose-binding positions include 329 to 332 (KFLV) and 334 to 335 (FE).

Belongs to the galactose-1-phosphate uridylyltransferase type 1 family. Homodimer. It depends on Zn(2+) as a cofactor.

It catalyses the reaction alpha-D-galactose 1-phosphate + UDP-alpha-D-glucose = alpha-D-glucose 1-phosphate + UDP-alpha-D-galactose. It functions in the pathway carbohydrate metabolism; galactose metabolism. This chain is Galactose-1-phosphate uridylyltransferase (GAL7), found in Saccharomyces cerevisiae (strain ATCC 204508 / S288c) (Baker's yeast).